We begin with the raw amino-acid sequence, 229 residues long: Chromophore lyase CpcT/CpeT 1 (229 aa).

It belongs to the CpcT/CpeT biliprotein lyase family.

In terms of biological role, covalently attaches a chromophore to Cys residue(s) of phycobiliproteins. The protein is Chromophore lyase CpcT/CpeT 1 of Gloeobacter violaceus (strain ATCC 29082 / PCC 7421).